Reading from the N-terminus, the 514-residue chain is Retron Vc95 probable ATPase (514 aa).

An ATP-binding motif is present at residues 92–99 (GNNGSGKS).

In terms of biological role, probable ATPase component of antiviral defense system retron Vc95, composed of a non-coding RNA (ncRNA), a reverse transcriptase (RT), this protein and a putative HNH endonuclease. Expression of retron Vc95 confers protection against bacteriophages T2, T4 and T6. At multiplicity of infection (MOI) of 0.02 cultures slow growth when infected with T4 but do not collapse, at MOI 2 cultures enter growth stasis. In Vibrio cholerae serotype O1 biovar El Tor, this protein is Retron Vc95 probable ATPase.